Consider the following 86-residue polypeptide: Large ribosomal subunit protein bL27c (86 aa).

A disordered region spans residues 1 to 27 (MAHKKGSGSTRNGRDSNSKRLGVKKYG).

This sequence belongs to the bacterial ribosomal protein bL27 family.

The protein localises to the plastid. The protein resides in the chloroplast. This is Large ribosomal subunit protein bL27c (rpl27) from Porphyra purpurea (Red seaweed).